Reading from the N-terminus, the 427-residue chain is 3-phosphoshikimate 1-carboxyvinyltransferase (427 aa).

3 residues coordinate 3-phosphoshikimate: Lys22, Ser23, and Arg27. Lys22 serves as a coordination point for phosphoenolpyruvate. Residues Gly96 and Arg124 each coordinate phosphoenolpyruvate. 7 residues coordinate 3-phosphoshikimate: Ser169, Ser170, Gln171, Ser197, Asp313, Asn336, and Lys340. Gln171 is a phosphoenolpyruvate binding site. The active-site Proton acceptor is Asp313. Arg344, Arg386, and Lys411 together coordinate phosphoenolpyruvate.

The protein belongs to the EPSP synthase family. Monomer.

The protein resides in the cytoplasm. The enzyme catalyses 3-phosphoshikimate + phosphoenolpyruvate = 5-O-(1-carboxyvinyl)-3-phosphoshikimate + phosphate. The protein operates within metabolic intermediate biosynthesis; chorismate biosynthesis; chorismate from D-erythrose 4-phosphate and phosphoenolpyruvate: step 6/7. Functionally, catalyzes the transfer of the enolpyruvyl moiety of phosphoenolpyruvate (PEP) to the 5-hydroxyl of shikimate-3-phosphate (S3P) to produce enolpyruvyl shikimate-3-phosphate and inorganic phosphate. In Escherichia coli O6:H1 (strain CFT073 / ATCC 700928 / UPEC), this protein is 3-phosphoshikimate 1-carboxyvinyltransferase.